Consider the following 294-residue polypeptide: Non-selective voltage-gated ion channel VDAC2 (294 aa).

Ala2 carries the post-translational modification N-acetylalanine. Residues Lys23 and Lys31 each coordinate ATP. At Lys31 the chain carries N6-acetyllysine; alternate. An N6-succinyllysine; alternate modification is found at Lys31. A Glycyl lysine isopeptide (Lys-Gly) (interchain with G-Cter in ubiquitin); alternate cross-link involves residue Lys31. Transmembrane regions (beta stranded) follow at residues 37-46 (LVKLDVKTKS) and 50-58 (VEFSTSGSS). Residue Lys64 forms a Glycyl lysine isopeptide (Lys-Gly) (interchain with G-Cter in ubiquitin) linkage. A beta stranded transmembrane segment spans residues 65–75 (VTGTLETKYKW). The residue at position 78 (Tyr78) is a Phosphotyrosine. The next 3 membrane-spanning stretches (beta stranded) occupy residues 80–87 (LTFTEKWN), 91–100 (TLGTEIAIED), and 106–115 (LKLTFDTTFS). Position 118 is a phosphothreonine (Thr118). Lys120 carries the N6-acetyllysine; alternate modification. Lys120 is covalently cross-linked (Glycyl lysine isopeptide (Lys-Gly) (interchain with G-Cter in ubiquitin); alternate). A Glycyl lysine isopeptide (Lys-Gly) (interchain with G-Cter in ubiquitin) cross-link involves residue Lys121. 4 beta stranded membrane-spanning segments follow: residues 122-131 (SGKIKSSYKR), 134-141 (INLGCDVD), 148-156 (AIHGSAVFG), and 161-169 (LAGYQMTFD). A Glycyl lysine isopeptide (Lys-Gly) (interchain with G-Cter in ubiquitin) cross-link involves residue Lys172. The next 6 membrane-spanning stretches (beta stranded) occupy residues 174–186 (KLTRNNFAVGYRT), 189–196 (FQLHTNVN), 200–209 (EFGGSIYQKV), 213–222 (LDTSVNLAWT), 229–238 (RFGIAAKYQL), and 242–249 (ASISAKVN). Ser251 carries the post-translational modification Phosphoserine. NAD(+)-binding positions include 253 to 255 (LIG) and 271 to 275 (SALVD). The next 2 beta stranded transmembrane spans lie at 253–262 (LIGVGYTQTL) and 265–274 (GVKLTLSALV). At Lys277 the chain carries N6-acetyllysine; alternate. Residue Lys277 forms a Glycyl lysine isopeptide (Lys-Gly) (interchain with G-Cter in ubiquitin); alternate linkage. A beta stranded membrane pass occupies residues 284–293 (HKLGLALELE).

This sequence belongs to the eukaryotic mitochondrial porin family. In terms of assembly, monomer, homodimer and higher order oligomers; formation of higher order structures is necessary for scramblase activity. Interacts with ARMC12 in a TBC1D21-dependent manner. Interacts with KLC3. Interacts with SPATA33. Interacts with PPP3CC in a SPATA33-dependent manner. In terms of processing, ubiquitinated by PRKN during mitophagy, leading to its degradation and enhancement of mitophagy. Deubiquitinated by USP30.

It localises to the mitochondrion outer membrane. The protein resides in the membrane. It carries out the reaction chloride(in) = chloride(out). The catalysed reaction is K(+)(in) = K(+)(out). The enzyme catalyses a 1,2-diacyl-sn-glycero-3-phospho-L-serine(in) = a 1,2-diacyl-sn-glycero-3-phospho-L-serine(out). It catalyses the reaction a 1,2-diacyl-sn-glycero-3-phosphocholine(in) = a 1,2-diacyl-sn-glycero-3-phosphocholine(out). It carries out the reaction a 1,2-diacyl-sn-glycero-3-phospho-(1D-myo-inositol)(in) = a 1,2-diacyl-sn-glycero-3-phospho-(1D-myo-inositol)(out). In terms of biological role, non-selective voltage-gated ion channel that mediates the transport of anions and cations through the mitochondrion outer membrane and plasma membrane. The channel adopts an open conformation at zero mV and a closed conformation at both positive and negative potentials. There are two populations of channels; the main that functions in a lower open-state conductance with lower ion selectivity, that switch, in a voltage-dependent manner, from the open to a low-conducting 'closed' state and the other that has a normal ion selectivity in the typical high conductance, 'open' state. Binds various lipids, including the sphingolipid ceramide, the phospholipid phosphatidylcholine, and the sterols cholesterol and oxysterol. Binding of ceramide promotes the mitochondrial outer membrane permeabilization (MOMP) apoptotic pathway. Its function is as follows. Catalyzes the scrambling of phospholipids across the outer mitochondrial membrane; the mechanism is unrelated to channel activity and is capable of translocating both anionic and zwitterionic phospholipids. The protein is Non-selective voltage-gated ion channel VDAC2 of Bos taurus (Bovine).